A 298-amino-acid polypeptide reads, in one-letter code: Ribosomal RNA small subunit methyltransferase A (298 aa).

Positions 35, 37, 62, 83, 108, and 133 each coordinate S-adenosyl-L-methionine.

Belongs to the class I-like SAM-binding methyltransferase superfamily. rRNA adenine N(6)-methyltransferase family. RsmA subfamily.

The protein resides in the cytoplasm. It carries out the reaction adenosine(1518)/adenosine(1519) in 16S rRNA + 4 S-adenosyl-L-methionine = N(6)-dimethyladenosine(1518)/N(6)-dimethyladenosine(1519) in 16S rRNA + 4 S-adenosyl-L-homocysteine + 4 H(+). In terms of biological role, specifically dimethylates two adjacent adenosines (A1518 and A1519) in the loop of a conserved hairpin near the 3'-end of 16S rRNA in the 30S particle. May play a critical role in biogenesis of 30S subunits. The polypeptide is Ribosomal RNA small subunit methyltransferase A (Streptococcus pyogenes serotype M2 (strain MGAS10270)).